We begin with the raw amino-acid sequence, 246 residues long: V-type proton ATPase subunit D (246 aa).

Belongs to the V-ATPase D subunit family. V-ATPase is a heteromultimeric enzyme made up of two complexes: the ATP-hydrolytic V1 complex and the proton translocation V0 complex. The V1 complex consists of three catalytic AB heterodimers that form a heterohexamer, three peripheral stalks each consisting of EG heterodimers, one central rotor including subunits D and F, and the regulatory subunits C and H. The proton translocation complex V0 consists of the proton transport subunit a, a ring of proteolipid subunits c9c'', rotary subunit d, subunits e and f, and the accessory subunits VhaAC45 and ATP6AP2.

Its function is as follows. Subunit of the V1 complex of vacuolar(H+)-ATPase (V-ATPase), a multisubunit enzyme composed of a peripheral complex (V1) that hydrolyzes ATP and a membrane integral complex (V0) that translocates protons. V-ATPase is responsible for acidifying and maintaining the pH of intracellular compartments and in some cell types, is targeted to the plasma membrane, where it is responsible for acidifying the extracellular environment. In Manduca sexta (Tobacco hawkmoth), this protein is V-type proton ATPase subunit D.